The following is a 286-amino-acid chain: Release factor glutamine methyltransferase (286 aa).

2 residues coordinate S-adenosyl-L-methionine: Asp-136 and Asn-179. 179 to 182 (NPPY) is a substrate binding site.

It belongs to the protein N5-glutamine methyltransferase family. PrmC subfamily.

The enzyme catalyses L-glutaminyl-[peptide chain release factor] + S-adenosyl-L-methionine = N(5)-methyl-L-glutaminyl-[peptide chain release factor] + S-adenosyl-L-homocysteine + H(+). Functionally, methylates the class 1 translation termination release factors RF1/PrfA and RF2/PrfB on the glutamine residue of the universally conserved GGQ motif. In Borreliella burgdorferi (strain ATCC 35210 / DSM 4680 / CIP 102532 / B31) (Borrelia burgdorferi), this protein is Release factor glutamine methyltransferase.